Here is a 330-residue protein sequence, read N- to C-terminus: Ketol-acid reductoisomerase (NADP(+)) (330 aa).

Positions 1-181 (MNAYYEQDAD…GGTKAGVIET (181 aa)) constitute a KARI N-terminal Rossmann domain. NADP(+)-binding positions include 24-27 (YGSQ), Arg47, Ser50, Ser52, and 82-85 (DQYQ). His107 is a catalytic residue. Gly133 contributes to the NADP(+) binding site. The 146-residue stretch at 182 to 327 (TFKNETETDL…SKLRDMMSWL (146 aa)) folds into the KARI C-terminal knotted domain. Mg(2+)-binding residues include Asp190, Glu194, Glu226, and Glu230. Position 251 (Ser251) interacts with substrate.

The protein belongs to the ketol-acid reductoisomerase family. Requires Mg(2+) as cofactor.

It carries out the reaction (2R)-2,3-dihydroxy-3-methylbutanoate + NADP(+) = (2S)-2-acetolactate + NADPH + H(+). The enzyme catalyses (2R,3R)-2,3-dihydroxy-3-methylpentanoate + NADP(+) = (S)-2-ethyl-2-hydroxy-3-oxobutanoate + NADPH + H(+). The protein operates within amino-acid biosynthesis; L-isoleucine biosynthesis; L-isoleucine from 2-oxobutanoate: step 2/4. It participates in amino-acid biosynthesis; L-valine biosynthesis; L-valine from pyruvate: step 2/4. Its function is as follows. Involved in the biosynthesis of branched-chain amino acids (BCAA). Catalyzes an alkyl-migration followed by a ketol-acid reduction of (S)-2-acetolactate (S2AL) to yield (R)-2,3-dihydroxy-isovalerate. In the isomerase reaction, S2AL is rearranged via a Mg-dependent methyl migration to produce 3-hydroxy-3-methyl-2-ketobutyrate (HMKB). In the reductase reaction, this 2-ketoacid undergoes a metal-dependent reduction by NADPH to yield (R)-2,3-dihydroxy-isovalerate. The protein is Ketol-acid reductoisomerase (NADP(+)) of Chlorobium limicola (strain DSM 245 / NBRC 103803 / 6330).